A 101-amino-acid chain; its full sequence is Replication restart protein PriB (101 aa).

The region spanning 1 to 101 (MTTNNLVLSG…IHAENVELKT (101 aa)) is the SSB domain.

The protein belongs to the PriB family. As to quaternary structure, homodimer. Interacts with PriA and DnaT. Component of the replication restart primosome. Primosome assembly occurs via a 'hand-off' mechanism. PriA binds to replication forks, subsequently PriB then DnaT bind; DnaT then displaces ssDNA to generate the helicase loading substrate.

Functionally, involved in the restart of stalled replication forks, which reloads the replicative helicase on sites other than the origin of replication; the PriA-PriB pathway is the major replication restart pathway. During primosome assembly it facilitates complex formation between PriA and DnaT on DNA; stabilizes PriA on DNA. Stimulates the DNA unwinding activity of PriA helicase. This is Replication restart protein PriB from Shewanella baltica (strain OS223).